Here is a 138-residue protein sequence, read N- to C-terminus: Small ribosomal subunit protein uS11c (138 aa).

A disordered region spans residues 1 to 21 (MAKSIPKIGSRKTGRIGSRKH). Residues 9 to 21 (GSRKTGRIGSRKH) are compositionally biased toward basic residues.

Belongs to the universal ribosomal protein uS11 family. In terms of assembly, part of the 30S ribosomal subunit.

It is found in the plastid. Its subcellular location is the chloroplast. This chain is Small ribosomal subunit protein uS11c, found in Pisum sativum (Garden pea).